Consider the following 158-residue polypeptide: NAD(P)H-quinone oxidoreductase subunit J, chloroplastic (158 aa).

It belongs to the complex I 30 kDa subunit family. As to quaternary structure, NDH is composed of at least 16 different subunits, 5 of which are encoded in the nucleus.

It is found in the plastid. Its subcellular location is the chloroplast thylakoid membrane. It carries out the reaction a plastoquinone + NADH + (n+1) H(+)(in) = a plastoquinol + NAD(+) + n H(+)(out). It catalyses the reaction a plastoquinone + NADPH + (n+1) H(+)(in) = a plastoquinol + NADP(+) + n H(+)(out). In terms of biological role, NDH shuttles electrons from NAD(P)H:plastoquinone, via FMN and iron-sulfur (Fe-S) centers, to quinones in the photosynthetic chain and possibly in a chloroplast respiratory chain. The immediate electron acceptor for the enzyme in this species is believed to be plastoquinone. Couples the redox reaction to proton translocation, and thus conserves the redox energy in a proton gradient. The protein is NAD(P)H-quinone oxidoreductase subunit J, chloroplastic of Morus indica (Mulberry).